The following is a 66-amino-acid chain: Large ribosomal subunit protein bL31 (66 aa).

Cys-16, Cys-18, Cys-36, and Cys-39 together coordinate Zn(2+).

It belongs to the bacterial ribosomal protein bL31 family. Type A subfamily. In terms of assembly, part of the 50S ribosomal subunit. Zn(2+) serves as cofactor.

Functionally, binds the 23S rRNA. This is Large ribosomal subunit protein bL31 from Campylobacter hominis (strain ATCC BAA-381 / DSM 21671 / CCUG 45161 / LMG 19568 / NCTC 13146 / CH001A).